Reading from the N-terminus, the 251-residue chain is Probable transcriptional regulatory protein Amuc_0709 (251 aa).

Belongs to the TACO1 family.

The protein localises to the cytoplasm. This Akkermansia muciniphila (strain ATCC BAA-835 / DSM 22959 / JCM 33894 / BCRC 81048 / CCUG 64013 / CIP 107961 / Muc) protein is Probable transcriptional regulatory protein Amuc_0709.